The chain runs to 200 residues: Pyridoxal 5'-phosphate synthase subunit PdxT (200 aa).

46 to 48 is a binding site for L-glutamine; the sequence is GES. Catalysis depends on C78, which acts as the Nucleophile. L-glutamine contacts are provided by residues R107 and 138–139; that span reads IR. Residues H175 and E177 each act as charge relay system in the active site.

Belongs to the glutaminase PdxT/SNO family. In terms of assembly, in the presence of PdxS, forms a dodecamer of heterodimers. Only shows activity in the heterodimer.

The catalysed reaction is aldehydo-D-ribose 5-phosphate + D-glyceraldehyde 3-phosphate + L-glutamine = pyridoxal 5'-phosphate + L-glutamate + phosphate + 3 H2O + H(+). It carries out the reaction L-glutamine + H2O = L-glutamate + NH4(+). It participates in cofactor biosynthesis; pyridoxal 5'-phosphate biosynthesis. Catalyzes the hydrolysis of glutamine to glutamate and ammonia as part of the biosynthesis of pyridoxal 5'-phosphate. The resulting ammonia molecule is channeled to the active site of PdxS. The chain is Pyridoxal 5'-phosphate synthase subunit PdxT from Corynebacterium glutamicum (strain ATCC 13032 / DSM 20300 / JCM 1318 / BCRC 11384 / CCUG 27702 / LMG 3730 / NBRC 12168 / NCIMB 10025 / NRRL B-2784 / 534).